Consider the following 609-residue polypeptide: Manganese lipoxygenase (609 aa).

An N-terminal signal peptide occupies residues 1 to 16 (MRLLLSIAGLTTVVNA). N24, N115, N156, and N193 each carry an N-linked (GlcNAc...) asparagine glycan. Positions 117–609 (SLKAIQDHGG…PGVIPFYLSV (493 aa)) constitute a Lipoxygenase domain. Residues H289 and H294 each coordinate Mn(2+). N385 carries N-linked (GlcNAc...) asparagine glycosylation. Mn(2+) is bound by residues H474 and N478. The N-linked (GlcNAc...) asparagine glycan is linked to N539. V609 contributes to the Mn(2+) binding site.

The protein belongs to the lipoxygenase family. Manganese lipoxygenase subfamily. Requires Mn(2+) as cofactor. In terms of processing, N- and O-glycosylated.

It localises to the secreted. The catalysed reaction is (9Z,12Z)-octadecadienoate + O2 = (9S)-hydroperoxy-(10E,12Z)-octadecadienoate. It carries out the reaction (9Z,12Z)-octadecadienoate + O2 = (11S)-hydroperoxy-(9Z,12Z)-octadecadienoate. The enzyme catalyses (9Z,12Z)-octadecadienoate + O2 = (13R)-hydroperoxy-(9Z,11E)-octadecadienoate. It catalyses the reaction (9Z,12Z,15Z)-octadecatrienoate + O2 = (11R)-hydroperoxy-(9Z,12Z,15Z)-octadecatrienoate. In terms of biological role, lipoxygenase that metabolizes linoleic and alpha-linolenic acids to 9-, 11- and 13-hydroperoxy fatty acids. Oxidizes linoleic acid to mainly 9S- and 13R-HPODE and alpha-linolenic acid to 11R-HPOTrE. The polypeptide is Manganese lipoxygenase (Colletotrichum gloeosporioides (strain Cg-14) (Anthracnose fungus)).